Consider the following 90-residue polypeptide: MKTAIFTVVLALAVFAVLSFGWEANEKALSEESTELIHEKEAASETEARECRYFWGECHDHMPCCDWLVCRYKWPITYNICVWNRTFPEK.

The N-terminal stretch at 1-19 is a signal peptide; the sequence is MKTAIFTVVLALAVFAVLS. Positions 20–50 are excised as a propeptide; the sequence is FGWEANEKALSEESTELIHEKEAASETEARE. 3 disulfide bridges follow: cysteine 51–cysteine 65, cysteine 58–cysteine 70, and cysteine 64–cysteine 81.

Belongs to the neurotoxin 10 (Hwtx-1) family. 13 (Hntx-13) subfamily. As to expression, expressed by the venom gland.

It is found in the secreted. Functionally, ion channel inhibitor. In Cyriopagopus hainanus (Chinese bird spider), this protein is U7-theraphotoxin-Hhn1a 5.